We begin with the raw amino-acid sequence, 485 residues long: Glutamyl-tRNA(Gln) amidotransferase subunit A (485 aa).

Residues K78 and S153 each act as charge relay system in the active site. The active-site Acyl-ester intermediate is the S177.

This sequence belongs to the amidase family. GatA subfamily. In terms of assembly, heterotrimer of A, B and C subunits.

The enzyme catalyses L-glutamyl-tRNA(Gln) + L-glutamine + ATP + H2O = L-glutaminyl-tRNA(Gln) + L-glutamate + ADP + phosphate + H(+). Allows the formation of correctly charged Gln-tRNA(Gln) through the transamidation of misacylated Glu-tRNA(Gln) in organisms which lack glutaminyl-tRNA synthetase. The reaction takes place in the presence of glutamine and ATP through an activated gamma-phospho-Glu-tRNA(Gln). The polypeptide is Glutamyl-tRNA(Gln) amidotransferase subunit A (Desulfatibacillum aliphaticivorans).